Reading from the N-terminus, the 156-residue chain is MSTVKTIAGQLDAKGLKVAVVATRFNDFIVDRLVGGALDYLERHGLDMENVTMVRIPGAFEMPLVCQKLAASGKYDGILALGAVIRGGTPHFDYVCAEASKGIAQAMLQHSMPVGFGLLTCDNIEQAIERAGSKAGNKGVEAAAAMLETIRVMEQL.

Residues Phe-25, 59-61, and 83-85 contribute to the 5-amino-6-(D-ribitylamino)uracil site; these read AFE and AVI. 88–89 contributes to the (2S)-2-hydroxy-3-oxobutyl phosphate binding site; it reads GT. The Proton donor role is filled by His-91. Phe-116 contributes to the 5-amino-6-(D-ribitylamino)uracil binding site. Position 130 (Arg-130) interacts with (2S)-2-hydroxy-3-oxobutyl phosphate.

It belongs to the DMRL synthase family.

The enzyme catalyses (2S)-2-hydroxy-3-oxobutyl phosphate + 5-amino-6-(D-ribitylamino)uracil = 6,7-dimethyl-8-(1-D-ribityl)lumazine + phosphate + 2 H2O + H(+). It functions in the pathway cofactor biosynthesis; riboflavin biosynthesis; riboflavin from 2-hydroxy-3-oxobutyl phosphate and 5-amino-6-(D-ribitylamino)uracil: step 1/2. Its function is as follows. Catalyzes the formation of 6,7-dimethyl-8-ribityllumazine by condensation of 5-amino-6-(D-ribitylamino)uracil with 3,4-dihydroxy-2-butanone 4-phosphate. This is the penultimate step in the biosynthesis of riboflavin. The protein is 6,7-dimethyl-8-ribityllumazine synthase of Desulfovibrio desulfuricans (strain ATCC 27774 / DSM 6949 / MB).